We begin with the raw amino-acid sequence, 162 residues long: Peroxiredoxin-2 (162 aa).

Residues I4–L162 enclose the Thioredoxin domain. C51 functions as the Cysteine sulfenic acid (-SOH) intermediate in the catalytic mechanism.

The protein belongs to the peroxiredoxin family. Prx5 subfamily. Monomer. Homodimer. Glutathionylation of C(P) causes the dimer to dissociate. Subsequent reduction of the mixed disulfide bond leads again to dimerization.

It catalyses the reaction [glutaredoxin]-dithiol + a hydroperoxide = [glutaredoxin]-disulfide + an alcohol + H2O. Thiol-specific peroxidase that catalyzes the reduction of hydrogen peroxide and organic hydroperoxides to water and alcohols, respectively. Can reduce H(2)O(2) and short chain organic, fatty acid, and phospholipid hydroperoxides. Plays a role in cell protection against oxidative stress by detoxifying peroxides. The protein is Peroxiredoxin-2 of Populus trichocarpa (Western balsam poplar).